We begin with the raw amino-acid sequence, 382 residues long: Secreted RxLR effector protein 118 (382 aa).

A signal peptide spans 1–21 (MRGAYYVTIALLVVASSQISA). A RxLR-dEER motif is present at residues 48-65 (RSLRGSRDVSNDVAIEER). The segment at 308-382 (MNKASTSKGK…AVTSLSSISN (75 aa)) is disordered. Over residues 310–323 (KASTSKGKSSVFTR) the composition is skewed to polar residues.

It belongs to the RxLR effector family.

It is found in the secreted. Its subcellular location is the host nucleus. In terms of biological role, secreted effector that completely suppresses the host cell death induced by cell death-inducing proteins. The chain is Secreted RxLR effector protein 118 from Plasmopara viticola (Downy mildew of grapevine).